The primary structure comprises 127 residues: Glycine cleavage system H protein (127 aa).

In terms of domain architecture, Lipoyl-binding spans 22–104; that stretch reads NVRIGITDYA…YDKAWMIVVK (83 aa). The residue at position 63 (lysine 63) is an N6-lipoyllysine.

The protein belongs to the GcvH family. The glycine cleavage system is composed of four proteins: P, T, L and H. Requires (R)-lipoate as cofactor.

Functionally, the glycine cleavage system catalyzes the degradation of glycine. The H protein shuttles the methylamine group of glycine from the P protein to the T protein. Its function is as follows. Is also involved in protein lipoylation via its role as an octanoyl/lipoyl carrier protein intermediate. This chain is Glycine cleavage system H protein, found in Geobacillus kaustophilus (strain HTA426).